Reading from the N-terminus, the 486-residue chain is Secreted protein C (486 aa).

The signal sequence occupies residues 1-22; sequence MKINIILLFVGLILAFAVLSNA. The tract at residues 30 to 332 is disordered; that stretch reads GVNPFDNNNS…SGSHGGSSSH (303 aa). Residue Asn37 is glycosylated (N-linked (GlcNAc...) asparagine). The segment covering 41–60 has biased composition (gly residues); the sequence is SGSGSGSGGGSSSSGSGTGQ. Residues 61-318 show a composition bias toward low complexity; the sequence is SSGTVSSSGS…TGSSEYSSSS (258 aa). 7 N-linked (GlcNAc...) asparagine glycosylation sites follow: Asn73, Asn74, Asn83, Asn112, Asn129, Asn149, and Asn174.

The protein belongs to the Sct family.

Its subcellular location is the secreted. The chain is Secreted protein C from Dictyostelium discoideum (Social amoeba).